A 107-amino-acid polypeptide reads, in one-letter code: Translation initiation factor IF-1, chloroplastic (107 aa).

Residues 8 to 83 (REKKNPREAK…SKGRIIYRLP (76 aa)) form the S1-like domain. The disordered stretch occupies residues 81 to 107 (RLPHKDSKRTEDSKDTEDLKDTKDSKD). Residues 83–107 (PHKDSKRTEDSKDTEDLKDTKDSKD) are compositionally biased toward basic and acidic residues.

The protein belongs to the IF-1 family. Component of the 30S ribosomal translation pre-initiation complex which assembles on the 30S ribosome in the order IF-2 and IF-3, IF-1 and N-formylmethionyl-tRNA(fMet); mRNA recruitment can occur at any time during PIC assembly.

Its subcellular location is the plastid. The protein localises to the chloroplast. In terms of biological role, one of the essential components for the initiation of protein synthesis. Stabilizes the binding of IF-2 and IF-3 on the 30S subunit to which N-formylmethionyl-tRNA(fMet) subsequently binds. Helps modulate mRNA selection, yielding the 30S pre-initiation complex (PIC). Upon addition of the 50S ribosomal subunit IF-1, IF-2 and IF-3 are released leaving the mature 70S translation initiation complex. The sequence is that of Translation initiation factor IF-1, chloroplastic from Saccharum hybrid (Sugarcane).